The sequence spans 756 residues: Probable chemoreceptor y4sI (756 aa).

A run of 2 helical transmembrane segments spans residues 26–46 and 330–350; these read VCVA…TSVA and LIKI…MAIL. HAMP domains follow at residues 353–406 and 434–486; these read RSIS…ARVA and DEQA…ETIR. The Methyl-accepting transducer domain occupies 491–720; it reads QAASMSSIVS…ESDAACRSLN (230 aa). Residues 736-756 are disordered; it reads GGGSSTRQPQSPPTQRYFMSR.

This sequence belongs to the methyl-accepting chemotaxis (MCP) protein family.

Its subcellular location is the cell membrane. Its function is as follows. Chemotactic-signal transducers respond to changes in the concentration of attractants and repellents in the environment, transduce a signal from the outside to the inside of the cell, and facilitate sensory adaptation through the variation of the level of methylation. Attractants increase the level of methylation while repellents decrease the level of methylation. The sequence is that of Probable chemoreceptor y4sI from Sinorhizobium fredii (strain NBRC 101917 / NGR234).